A 591-amino-acid polypeptide reads, in one-letter code: uncharacterized protein (591 aa).

Residues 1–10 (MSIRGVGGNG) are compositionally biased toward gly residues. Disordered regions lie at residues 1–37 (MSIR…KVED), 110–135 (RSSA…GYRE), 324–344 (EESG…AQGP), and 487–517 (GHYQ…TPPL). The span at 11-32 (NSRIPSHNGDGSNRRSQNTKGN) shows a compositional bias: polar residues. Residues 110-132 (RSSATRAAESGSSSRTARGASSG) show a composition bias toward low complexity. The segment covering 490 to 507 (QDPRASDYDLPRASDYDL) has biased composition (basic and acidic residues).

It to C.muridarum TC_0268.

This is an uncharacterized protein from Chlamydia trachomatis serovar D (strain ATCC VR-885 / DSM 19411 / UW-3/Cx).